A 110-amino-acid chain; its full sequence is uncharacterized protein (110 aa).

Helical transmembrane passes span 5 to 25 (ILAIIFVAVGTYLIRYIPIHL), 62 to 82 (FPIIFSNVLISTISLIFAIVS), and 90 to 110 (GISILISVVIYYLASKFLISI).

To A.fulgidus AF1754.

The protein resides in the cell membrane. This is an uncharacterized protein from Methanocaldococcus jannaschii (strain ATCC 43067 / DSM 2661 / JAL-1 / JCM 10045 / NBRC 100440) (Methanococcus jannaschii).